Consider the following 31-residue polypeptide: Cytochrome b6-f complex subunit 6 (31 aa).

A helical membrane pass occupies residues 4-26 (ITSYFGFLLAALTITPALLISLN).

It belongs to the PetL family. As to quaternary structure, the 4 large subunits of the cytochrome b6-f complex are cytochrome b6, subunit IV (17 kDa polypeptide, PetD), cytochrome f and the Rieske protein, while the 4 small subunits are PetG, PetL, PetM and PetN. The complex functions as a dimer.

The protein localises to the plastid. Its subcellular location is the chloroplast thylakoid membrane. Component of the cytochrome b6-f complex, which mediates electron transfer between photosystem II (PSII) and photosystem I (PSI), cyclic electron flow around PSI, and state transitions. PetL is important for photoautotrophic growth as well as for electron transfer efficiency and stability of the cytochrome b6-f complex. The sequence is that of Cytochrome b6-f complex subunit 6 from Dioscorea elephantipes (Elephant's foot yam).